A 100-amino-acid chain; its full sequence is SAGA-associated factor 11 (100 aa).

The SGF11-type zinc-finger motif lies at 73 to 94 (FQCENCGRSIAGGRFAQHMTKC).

Belongs to the SGF11 family. As to quaternary structure, component of the 1.8 MDa SAGA transcription coactivator-HAT complex. SAGA is built of 5 distinct domains with specialized functions. Within the SAGA complex, SUS1, SGF11, SGF73 and UBP8 form an additional subcomplex of SAGA called the DUB module (deubiquitination module). Interacts directly with SGF73, SUS1 and UBP8.

The protein localises to the nucleus. Functions as a component of the transcription regulatory histone acetylation (HAT) complex SAGA. At the promoters, SAGA is required for recruitment of the basal transcription machinery. It influences RNA polymerase II transcriptional activity through different activities such as TBP interaction and promoter selectivity, interaction with transcription activators, and chromatin modification through histone acetylation and deubiquitination. SAGA acetylates nucleosomal histone H3 to some extent (to form H3K9ac, H3K14ac, H3K18ac and H3K23ac). SAGA interacts with DNA via upstream activating sequences (UASs). Involved in transcriptional regulation of a subset of SAGA-regulated genes. Within the SAGA complex, participates in a subcomplex, that specifically deubiquitinates histones H2B. This chain is SAGA-associated factor 11, found in Debaryomyces hansenii (strain ATCC 36239 / CBS 767 / BCRC 21394 / JCM 1990 / NBRC 0083 / IGC 2968) (Yeast).